The primary structure comprises 256 residues: MVTLDTQSIIRTVNVNFYYGRFQALTDITMDFQKNRVTALIGPSGCGKSTLLRLLNRMNDLIDGCRVEGQVLFEDQNIYAPEMDPVEVRRRIGMVFQKPNPFPKTIFDNIAYGPRLHGFRKRSDLEALVESSLQQAVLWEEVKDILPRSAMTLSGGQQQRLCIARALAMKPDVLLMDEPTSALDPISTAKIEELIDELKENYTIIIVTHNMQQAARVSGMTGFFYLGKLIEYNATEKIFTNPEQKQTEDYITGRFG.

Residues 10-251 (IRTVNVNFYY…PEQKQTEDYI (242 aa)) form the ABC transporter domain. 42–49 (GPSGCGKS) contacts ATP.

This sequence belongs to the ABC transporter superfamily. Phosphate importer (TC 3.A.1.7) family. The complex is composed of two ATP-binding proteins (PstB), two transmembrane proteins (PstC and PstA) and a solute-binding protein (PstS).

It is found in the cell inner membrane. The catalysed reaction is phosphate(out) + ATP + H2O = ADP + 2 phosphate(in) + H(+). Its function is as follows. Part of the ABC transporter complex PstSACB involved in phosphate import. Responsible for energy coupling to the transport system. The protein is Phosphate import ATP-binding protein PstB of Syntrophus aciditrophicus (strain SB).